The sequence spans 566 residues: Sorting nexin lst-4 (566 aa).

The SH3 domain maps to 1–61 (MAQVKAEYDF…PESYVTPYQA (61 aa)). The disordered stretch occupies residues 59 to 179 (YQASRPPPVL…DRGSNKVNKN (121 aa)). A compositionally biased stretch (pro residues) spans 63–77 (RPPPVLPPPLPPTSS). Over residues 127–140 (DDFDDEWTDEDDEQ) the composition is skewed to acidic residues. Polar residues predominate over residues 143-154 (TRPNVQSSIGSN). Over residues 155-173 (SRRDLSRSHSEHGGPDRGS) the composition is skewed to basic and acidic residues. Residues 227–339 (YTCIVDKPKK…HFISCTDEKD (113 aa)) enclose the PX domain. Residues 362–566 (TVPHQPLDPN…KLTSLAARYD (205 aa)) enclose the BAR domain.

The protein belongs to the sorting nexin family. In terms of assembly, homodimer. Isoform d interacts (via SH3 domain) with dyn-1. In terms of tissue distribution, expressed in vulval precursor cells (VPCs) and apoptotic germ cells. Colocalizes with actin, dyn-1 and rab-5 in early phagosomes.

The protein resides in the cytoplasm. It localises to the cytoplasmic vesicle. Its subcellular location is the phagosome membrane. Its function is as follows. Involved in the signaling of vulval development by acting as a negative regulator of epidermal growth factor receptor (EGFR) signaling. Aids in phagosomal membrane tubule formation which is required for phagosomal fusion with endosomes and lysosomes. Also recruits rab-7 to phagosomes by an interaction with dyn-1. These are events leading to phagosome maturation which is a step in apoptotic cell corpse clearance. Binds phosphatidylinositol-3,4,5-trisphosphate. This Caenorhabditis elegans protein is Sorting nexin lst-4.